The primary structure comprises 235 residues: 2-C-methyl-D-erythritol 4-phosphate cytidylyltransferase (235 aa).

This sequence belongs to the IspD/TarI cytidylyltransferase family. IspD subfamily.

It catalyses the reaction 2-C-methyl-D-erythritol 4-phosphate + CTP + H(+) = 4-CDP-2-C-methyl-D-erythritol + diphosphate. It functions in the pathway isoprenoid biosynthesis; isopentenyl diphosphate biosynthesis via DXP pathway; isopentenyl diphosphate from 1-deoxy-D-xylulose 5-phosphate: step 2/6. Its function is as follows. Catalyzes the formation of 4-diphosphocytidyl-2-C-methyl-D-erythritol from CTP and 2-C-methyl-D-erythritol 4-phosphate (MEP). The protein is 2-C-methyl-D-erythritol 4-phosphate cytidylyltransferase of Pseudomonas putida (strain ATCC 700007 / DSM 6899 / JCM 31910 / BCRC 17059 / LMG 24140 / F1).